A 171-amino-acid polypeptide reads, in one-letter code: Transcription antitermination protein NusB (171 aa).

The protein belongs to the NusB family.

Functionally, involved in transcription antitermination. Required for transcription of ribosomal RNA (rRNA) genes. Binds specifically to the boxA antiterminator sequence of the ribosomal RNA (rrn) operons. In Brucella ovis (strain ATCC 25840 / 63/290 / NCTC 10512), this protein is Transcription antitermination protein NusB.